The chain runs to 366 residues: Cyclin-O protein A (366 aa).

Disordered stretches follow at residues 18 to 55 (AAFS…GIKK) and 80 to 99 (YETP…PYDS).

It belongs to the cyclin family.

It is found in the cytoplasm. In terms of biological role, specifically required for generation of multiciliated cells, possibly by promoting a cell cycle state compatible with centriole amplification and maturation. Acts downstream of mcidas to promote mother centriole amplification and maturation in preparation for apical docking. The sequence is that of Cyclin-O protein A (ccno-a) from Xenopus laevis (African clawed frog).